We begin with the raw amino-acid sequence, 111 residues long: Probable 4-amino-4-deoxy-L-arabinose-phosphoundecaprenol flippase subunit ArnE (111 aa).

The next 3 helical transmembrane spans lie at 38-58 (LWLG…LLVL), 61-81 (LPVG…TLAA), and 89-109 (VLPR…ILGS). An EamA domain is found at 40 to 109 (LGLALICMGA…IISGIIILGS (70 aa)).

Belongs to the ArnE family. As to quaternary structure, heterodimer of ArnE and ArnF.

It is found in the cell inner membrane. The protein operates within bacterial outer membrane biogenesis; lipopolysaccharide biosynthesis. Functionally, translocates 4-amino-4-deoxy-L-arabinose-phosphoundecaprenol (alpha-L-Ara4N-phosphoundecaprenol) from the cytoplasmic to the periplasmic side of the inner membrane. The protein is Probable 4-amino-4-deoxy-L-arabinose-phosphoundecaprenol flippase subunit ArnE of Salmonella paratyphi A (strain ATCC 9150 / SARB42).